We begin with the raw amino-acid sequence, 102 residues long: MDISIISDKNNPLLYRREIKFTVSFDAATPSIKDVKMKLVAVLNADKKVLVVDTLDQIFGKLEAEGYAKIYNDEKAMATIETKSVLEKNKIEEEAEAEVAEE.

It belongs to the eukaryotic ribosomal protein eS24 family.

The polypeptide is Small ribosomal subunit protein eS24 (Methanococcus maripaludis (strain C7 / ATCC BAA-1331)).